Reading from the N-terminus, the 80-residue chain is Small ribosomal subunit protein bS18 (80 aa).

This sequence belongs to the bacterial ribosomal protein bS18 family. As to quaternary structure, part of the 30S ribosomal subunit. Forms a tight heterodimer with protein bS6.

In terms of biological role, binds as a heterodimer with protein bS6 to the central domain of the 16S rRNA, where it helps stabilize the platform of the 30S subunit. This Staphylococcus aureus (strain Mu3 / ATCC 700698) protein is Small ribosomal subunit protein bS18.